The sequence spans 486 residues: Glutamate--tRNA ligase (486 aa).

The 'HIGH' region signature appears at 11-21; it reads PSPTGLLHIGN. The 'KMSKS' region signature appears at 255–259; the sequence is KLSKR. ATP is bound at residue K258.

This sequence belongs to the class-I aminoacyl-tRNA synthetase family. Glutamate--tRNA ligase type 1 subfamily. As to quaternary structure, monomer.

The protein localises to the cytoplasm. It catalyses the reaction tRNA(Glu) + L-glutamate + ATP = L-glutamyl-tRNA(Glu) + AMP + diphosphate. Its function is as follows. Catalyzes the attachment of glutamate to tRNA(Glu) in a two-step reaction: glutamate is first activated by ATP to form Glu-AMP and then transferred to the acceptor end of tRNA(Glu). The chain is Glutamate--tRNA ligase from Streptococcus pneumoniae (strain Hungary19A-6).